We begin with the raw amino-acid sequence, 109 residues long: Iron-sulfur cluster assembly protein CyaY (109 aa).

Belongs to the frataxin family.

Functionally, involved in iron-sulfur (Fe-S) cluster assembly. May act as a regulator of Fe-S biogenesis. This chain is Iron-sulfur cluster assembly protein CyaY, found in Bordetella pertussis (strain Tohama I / ATCC BAA-589 / NCTC 13251).